A 218-amino-acid polypeptide reads, in one-letter code: Probable transaldolase (218 aa).

The active-site Schiff-base intermediate with substrate is the K87.

This sequence belongs to the transaldolase family. Type 3B subfamily.

It localises to the cytoplasm. It carries out the reaction D-sedoheptulose 7-phosphate + D-glyceraldehyde 3-phosphate = D-erythrose 4-phosphate + beta-D-fructose 6-phosphate. It functions in the pathway carbohydrate degradation; pentose phosphate pathway; D-glyceraldehyde 3-phosphate and beta-D-fructose 6-phosphate from D-ribose 5-phosphate and D-xylulose 5-phosphate (non-oxidative stage): step 2/3. Its function is as follows. Transaldolase is important for the balance of metabolites in the pentose-phosphate pathway. The protein is Probable transaldolase of Cytophaga hutchinsonii (strain ATCC 33406 / DSM 1761 / CIP 103989 / NBRC 15051 / NCIMB 9469 / D465).